The chain runs to 318 residues: Ribonuclease Z (318 aa).

Residues histidine 62, histidine 64, aspartate 66, histidine 67, histidine 144, aspartate 215, and histidine 273 each coordinate Zn(2+). The active-site Proton acceptor is the aspartate 66.

This sequence belongs to the RNase Z family. As to quaternary structure, homodimer. It depends on Zn(2+) as a cofactor.

The enzyme catalyses Endonucleolytic cleavage of RNA, removing extra 3' nucleotides from tRNA precursor, generating 3' termini of tRNAs. A 3'-hydroxy group is left at the tRNA terminus and a 5'-phosphoryl group is left at the trailer molecule.. Functionally, zinc phosphodiesterase, which displays some tRNA 3'-processing endonuclease activity. Probably involved in tRNA maturation, by removing a 3'-trailer from precursor tRNA. This is Ribonuclease Z from Prochlorococcus marinus (strain MIT 9313).